A 533-amino-acid polypeptide reads, in one-letter code: Peptide chain release factor 3 (533 aa).

A tr-type G domain is found at 11–284 (RRRRTFAIIS…ALVGLSPEPL (274 aa)). GTP-binding positions include 20 to 27 (SHPDAGKT), 92 to 96 (DTPGH), and 146 to 149 (NKLD).

This sequence belongs to the TRAFAC class translation factor GTPase superfamily. Classic translation factor GTPase family. PrfC subfamily.

It localises to the cytoplasm. Its function is as follows. Increases the formation of ribosomal termination complexes and stimulates activities of RF-1 and RF-2. It binds guanine nucleotides and has strong preference for UGA stop codons. It may interact directly with the ribosome. The stimulation of RF-1 and RF-2 is significantly reduced by GTP and GDP, but not by GMP. In Ralstonia nicotianae (strain ATCC BAA-1114 / GMI1000) (Ralstonia solanacearum), this protein is Peptide chain release factor 3.